A 1040-amino-acid chain; its full sequence is Multidrug resistance protein MdtB (1040 aa).

12 consecutive transmembrane segments (helical) span residues 16 to 36, 347 to 367, 369 to 389, 396 to 416, 440 to 460, 472 to 492, 537 to 557, 863 to 883, 888 to 908, 911 to 931, 968 to 988, and 998 to 1018; these read FIMR…AGII, LMMA…NIPA, IIPG…MVFL, LTLM…IVVI, IGFT…PLLF, FAIT…TLTP, WLTL…WVFI, LGST…VLGI, FIHP…ALLA, IAGS…IGIV, ILMT…STGV, and IGMV…TPVI.

Belongs to the resistance-nodulation-cell division (RND) (TC 2.A.6) family. MdtB subfamily. As to quaternary structure, part of a tripartite efflux system composed of MdtA, MdtB and MdtC. MdtB forms a heteromultimer with MdtC.

It is found in the cell inner membrane. Its function is as follows. The MdtABC tripartite complex confers resistance against novobiocin and deoxycholate. In Escherichia coli O8 (strain IAI1), this protein is Multidrug resistance protein MdtB.